We begin with the raw amino-acid sequence, 858 residues long: M-phase phosphoprotein 8 (858 aa).

Residues 18–55 are disordered; the sequence is VPDSIGRSPESEGVGAGDEEKDAATKGTVAVGDSEEDG. Phosphoserine is present on residues S51, S85, S136, and S138. In terms of domain architecture, Chromo spans 59 to 118; sequence FEVERILDMKCEGGKNLYKVRWKGYTSEDDTWEPEVHLEDCKEVLLEFRKKLAENKAKAV. The segment at 80 to 87 is histone H3K9me3 binding; that stretch reads WKGYTSED. Residues 129–175 form a disordered region; sequence NDIFEADSDSDQQSDTKEDISPRKKKKKIKCKEETSPEDLRKKRTKM. A Phosphothreonine modification is found at T144. 2 positions are modified to phosphoserine; by CDK1: S149 and S164. Basic and acidic residues predominate over residues 159 to 169; it reads CKEETSPEDLR. At S188 the chain carries Phosphoserine. Disordered regions lie at residues 209 to 234 and 250 to 300; these read ELKD…NKRA and NRKT…DKTA. Residues S267, S271, and S278 each carry the phosphoserine modification. The segment covering 273 to 282 has biased composition (acidic residues); sequence ILEDDSEDFI. Basic and acidic residues predominate over residues 283–300; that stretch reads SDNREENQNVRSVRDKTA. S318 is subject to Phosphoserine. Residues 321–431 are disordered; it reads EDAGTRVRRK…YDLDKEEKAR (111 aa). Over residues 335 to 357 the composition is skewed to basic and acidic residues; the sequence is RKFEEPKEIKKLESTNAFLERRA. T385 carries the phosphothreonine; by CDK1 modification. Phosphoserine is present on residues S392 and S400. Residues 407–431 show a composition bias toward basic and acidic residues; sequence EKEKKNEPKGKYQKRYDLDKEEKAR. T453 is subject to Phosphothreonine. 4 ANK repeats span residues 598 to 627, 631 to 660, 664 to 693, and 697 to 726; these read TGMT…KVNG, NGTT…FVNV, NGET…DCNI, and HQNS…TLSR.

In terms of assembly, homodimer. Interacts (via chromo domain) with histone H3K9me3. Has the highest affinity for H3K9me3, and lesser affinity for H3K9me2 and H3K9me1. Component of the HUSH complex; at least composed of TASOR, PPHLN1 and MPHOSPH8. Interacts with DNMT3, EHMT1 and SETDB1. Interacts with MORC2; the interaction associateS MORC2 with the HUSH complex which recruits MORC2 to heterochromatic loci. Interacts with ZNF638; leading to recruitment of the HUSH complex to unintegrated retroviral DNA. Interacts with TASOR. Post-translationally, phosphorylated in M (mitotic) phase. Phosphorylation by CDK1 promotes dissociation from chromatin. In terms of tissue distribution, expressed in the spermatogonia, spermatocytes and granular cells within the cerebellum.

The protein localises to the nucleus. It is found in the chromosome. Its function is as follows. Heterochromatin component that specifically recognizes and binds methylated 'Lys-9' of histone H3 (H3K9me) and promotes recruitment of proteins that mediate epigenetic repression. Mediates recruitment of the HUSH complex to H3K9me3 sites: the HUSH complex is recruited to genomic loci rich in H3K9me3 and is required to maintain transcriptional silencing by promoting recruitment of SETDB1, a histone methyltransferase that mediates further deposition of H3K9me3, as well as MORC2. Binds H3K9me and promotes DNA methylation by recruiting DNMT3A to target CpG sites; these can be situated within the coding region of the gene. Mediates down-regulation of CDH1 expression. Also represses L1 retrotransposons in collaboration with MORC2 and, probably, SETDB1, the silencing is dependent of repressive epigenetic modifications, such as H3K9me3 mark. Silencing events often occur within introns of transcriptionally active genes, and lead to the down-regulation of host gene expression. The HUSH complex is also involved in the silencing of unintegrated retroviral DNA by being recruited by ZNF638: some part of the retroviral DNA formed immediately after infection remains unintegrated in the host genome and is transcriptionally repressed. The chain is M-phase phosphoprotein 8 from Mus musculus (Mouse).